The primary structure comprises 259 residues: 4-hydroxy-tetrahydrodipicolinate reductase (259 aa).

NAD(+)-binding positions include 8–13 (GFAGAM), 94–96 (GTT), and 120–123 (APNF). The active-site Proton donor/acceptor is His150. His151 serves as a coordination point for (S)-2,3,4,5-tetrahydrodipicolinate. Lys154 serves as the catalytic Proton donor. 160 to 161 (GT) provides a ligand contact to (S)-2,3,4,5-tetrahydrodipicolinate.

Belongs to the DapB family.

It is found in the cytoplasm. It carries out the reaction (S)-2,3,4,5-tetrahydrodipicolinate + NAD(+) + H2O = (2S,4S)-4-hydroxy-2,3,4,5-tetrahydrodipicolinate + NADH + H(+). The catalysed reaction is (S)-2,3,4,5-tetrahydrodipicolinate + NADP(+) + H2O = (2S,4S)-4-hydroxy-2,3,4,5-tetrahydrodipicolinate + NADPH + H(+). It functions in the pathway amino-acid biosynthesis; L-lysine biosynthesis via DAP pathway; (S)-tetrahydrodipicolinate from L-aspartate: step 4/4. In terms of biological role, catalyzes the conversion of 4-hydroxy-tetrahydrodipicolinate (HTPA) to tetrahydrodipicolinate. The protein is 4-hydroxy-tetrahydrodipicolinate reductase of Limosilactobacillus fermentum (strain NBRC 3956 / LMG 18251) (Lactobacillus fermentum).